Consider the following 99-residue polypeptide: Transmembrane protein 14A (99 aa).

The next 3 helical transmembrane spans lie at 1-21 (MDLI…LGYK), 24-44 (GGVP…YGAY), and 79-99 (PAGL…LLLL).

Belongs to the TMEM14 family.

The protein localises to the mitochondrion membrane. Its subcellular location is the endoplasmic reticulum membrane. Its function is as follows. Inhibits apoptosis via negative regulation of the mitochondrial outer membrane permeabilization involved in apoptotic signaling pathway. The chain is Transmembrane protein 14A (TMEM14A) from Sus scrofa (Pig).